Here is a 299-residue protein sequence, read N- to C-terminus: Coenzyme PQQ synthesis protein B (299 aa).

Belongs to the PqqB family.

Its pathway is cofactor biosynthesis; pyrroloquinoline quinone biosynthesis. May be involved in the transport of PQQ or its precursor to the periplasm. This Xanthomonas euvesicatoria pv. vesicatoria (strain 85-10) (Xanthomonas campestris pv. vesicatoria) protein is Coenzyme PQQ synthesis protein B.